The following is a 216-amino-acid chain: Endoplasmic reticulum vesicle protein 25 (216 aa).

The signal sequence occupies residues 1 to 20 (MASLKSLLSGFLLLAGAAQA). Topologically, residues 21 to 185 (LKFDLEATSS…TNESTNNRVK (165 aa)) are lumenal. A GOLD domain is found at 36–126 (RRCIRNFVNK…RRHVELDIDI (91 aa)). A helical transmembrane segment spans residues 186-206 (WFGMATTFLLIALWGWQIMYL). Topologically, residues 207–216 (RAYFRSKHLI) are cytoplasmic.

This sequence belongs to the EMP24/GP25L family.

Its subcellular location is the endoplasmic reticulum membrane. It is found in the golgi apparatus membrane. Constituent of COPII-coated endoplasmic reticulum-derived transport vesicles. Required for efficient transport of a subset of secretory proteins to the Golgi. Facilitates retrograde transport from the Golgi to the endoplasmic reticulum. This chain is Endoplasmic reticulum vesicle protein 25 (erv-1), found in Neurospora crassa (strain ATCC 24698 / 74-OR23-1A / CBS 708.71 / DSM 1257 / FGSC 987).